Consider the following 351-residue polypeptide: MSVTMTLGQLAEVLGATLKGPEALQITGLATLQEAGPTQLSFLANPQYRKYLDNSQAGAVLLKAADAESFAGNTLVVADPYLAYARISHLFDPKPKAEAGIHPSAVVAEDAQVDASASIGPFAVIESGARIGANVSIGAHCFIGARCVVGEGGWLAPRVTLYHDVTIGKRVVIQSGAVIGGEGFGFANEKGIWRKIAQIGGVTIGDDVEIGVNTAVDRGALSDTRIGDGVKLDNQIQIAHNVQIGDHTAMAACVGISGSTRIGKHCMLAGGVGLVGHIDICDNVFVSGMTMVTRSITEPGSYSSGTAMQPLADWRKSAARIRHLDDMAKRLQQLEKRVDTVTSGGLPTSEG.

The active-site Proton acceptor is the histidine 240.

The protein belongs to the transferase hexapeptide repeat family. LpxD subfamily. Homotrimer.

The catalysed reaction is a UDP-3-O-[(3R)-3-hydroxyacyl]-alpha-D-glucosamine + a (3R)-hydroxyacyl-[ACP] = a UDP-2-N,3-O-bis[(3R)-3-hydroxyacyl]-alpha-D-glucosamine + holo-[ACP] + H(+). Its pathway is bacterial outer membrane biogenesis; LPS lipid A biosynthesis. Functionally, catalyzes the N-acylation of UDP-3-O-acylglucosamine using 3-hydroxyacyl-ACP as the acyl donor. Is involved in the biosynthesis of lipid A, a phosphorylated glycolipid that anchors the lipopolysaccharide to the outer membrane of the cell. In Pseudomonas putida (strain ATCC 47054 / DSM 6125 / CFBP 8728 / NCIMB 11950 / KT2440), this protein is UDP-3-O-acylglucosamine N-acyltransferase.